Reading from the N-terminus, the 156-residue chain is 3-hydroxyacyl-[acyl-carrier-protein] dehydratase FabZ (156 aa).

His50 is a catalytic residue.

It belongs to the thioester dehydratase family. FabZ subfamily.

It is found in the cytoplasm. It carries out the reaction a (3R)-hydroxyacyl-[ACP] = a (2E)-enoyl-[ACP] + H2O. Functionally, involved in unsaturated fatty acids biosynthesis. Catalyzes the dehydration of short chain beta-hydroxyacyl-ACPs and long chain saturated and unsaturated beta-hydroxyacyl-ACPs. The sequence is that of 3-hydroxyacyl-[acyl-carrier-protein] dehydratase FabZ from Janthinobacterium sp. (strain Marseille) (Minibacterium massiliensis).